Here is a 187-residue protein sequence, read N- to C-terminus: Ribosome-recycling factor (187 aa).

It belongs to the RRF family.

Its subcellular location is the cytoplasm. Functionally, responsible for the release of ribosomes from messenger RNA at the termination of protein biosynthesis. May increase the efficiency of translation by recycling ribosomes from one round of translation to another. This chain is Ribosome-recycling factor, found in Bradyrhizobium sp. (strain ORS 278).